The chain runs to 311 residues: HTH-type transcriptional regulator DsdC (311 aa).

One can recognise an HTH lysR-type domain in the interval 15–72 (WQLSKMHTFEVAARHQSFALAAEELSLSPSAVSHRINQLEEELGIQLFVRSHRKVELT). The segment at residues 32–51 (FALAAEELSLSPSAVSHRIN) is a DNA-binding region (H-T-H motif).

This sequence belongs to the LysR transcriptional regulatory family.

Regulates the expression of the dsdX-dsdA operon. This is HTH-type transcriptional regulator DsdC from Escherichia coli (strain K12).